The following is a 274-amino-acid chain: DNA-directed RNA polymerase subunit Rpo3 (274 aa).

3 residues coordinate [3Fe-4S] cluster: Cys202, Cys205, and Cys208.

This sequence belongs to the archaeal Rpo3/eukaryotic RPB3 RNA polymerase subunit family. As to quaternary structure, part of the RNA polymerase complex. It depends on [3Fe-4S] cluster as a cofactor.

Its subcellular location is the cytoplasm. The enzyme catalyses RNA(n) + a ribonucleoside 5'-triphosphate = RNA(n+1) + diphosphate. Its function is as follows. DNA-dependent RNA polymerase (RNAP) catalyzes the transcription of DNA into RNA using the four ribonucleoside triphosphates as substrates. The chain is DNA-directed RNA polymerase subunit Rpo3 from Methanobrevibacter smithii (strain ATCC 35061 / DSM 861 / OCM 144 / PS).